The following is a 319-amino-acid chain: Ribose-phosphate pyrophosphokinase (319 aa).

ATP is bound by residues 40-42 and 99-100; these read DGE and RQ. His134 and Asp174 together coordinate Mg(2+). Residue Lys198 is part of the active site. Residues Arg200, Asp224, and 228–232 contribute to the D-ribose 5-phosphate site; that span reads DTAGT.

The protein belongs to the ribose-phosphate pyrophosphokinase family. Class I subfamily. As to quaternary structure, homohexamer. Mg(2+) serves as cofactor.

The protein localises to the cytoplasm. It catalyses the reaction D-ribose 5-phosphate + ATP = 5-phospho-alpha-D-ribose 1-diphosphate + AMP + H(+). Its pathway is metabolic intermediate biosynthesis; 5-phospho-alpha-D-ribose 1-diphosphate biosynthesis; 5-phospho-alpha-D-ribose 1-diphosphate from D-ribose 5-phosphate (route I): step 1/1. Functionally, involved in the biosynthesis of the central metabolite phospho-alpha-D-ribosyl-1-pyrophosphate (PRPP) via the transfer of pyrophosphoryl group from ATP to 1-hydroxyl of ribose-5-phosphate (Rib-5-P). The chain is Ribose-phosphate pyrophosphokinase from Xanthomonas axonopodis pv. citri (strain 306).